We begin with the raw amino-acid sequence, 134 residues long: Small ribosomal subunit protein uS11 (134 aa).

Belongs to the universal ribosomal protein uS11 family. Part of the 30S ribosomal subunit. Interacts with proteins S7 and S18. Binds to IF-3.

In terms of biological role, located on the platform of the 30S subunit, it bridges several disparate RNA helices of the 16S rRNA. Forms part of the Shine-Dalgarno cleft in the 70S ribosome. This chain is Small ribosomal subunit protein uS11, found in Corynebacterium jeikeium (strain K411).